The following is a 75-amino-acid chain: Small ribosomal subunit protein bS18 (75 aa).

It belongs to the bacterial ribosomal protein bS18 family. In terms of assembly, part of the 30S ribosomal subunit. Forms a tight heterodimer with protein bS6.

Its function is as follows. Binds as a heterodimer with protein bS6 to the central domain of the 16S rRNA, where it helps stabilize the platform of the 30S subunit. This is Small ribosomal subunit protein bS18 from Psychromonas ingrahamii (strain DSM 17664 / CCUG 51855 / 37).